Here is a 381-residue protein sequence, read N- to C-terminus: ADP,ATP carrier protein 1, mitochondrial (381 aa).

The transit peptide at methionine 1 to glutamine 70 directs the protein to the mitochondrion. Solcar repeat units lie at residues threonine 78–leucine 171, lysine 183–valine 276, and aspartate 284–isoleucine 370. 5 helical membrane-spanning segments follow: residues phenylalanine 80–leucine 107, threonine 148–phenylalanine 172, tyrosine 181–leucine 201, phenylalanine 252–valine 273, and phenylalanine 287–isoleucine 307. Positions 153 and 165 each coordinate ADP. Residue arginine 311 participates in ADP binding. Residues arginine 311–methionine 316 form an important for transport activity region. The Nucleotide carrier signature motif motif lies at arginine 311–methionine 316. The chain crosses the membrane as a helical span at residues alanine 347–leucine 367.

It belongs to the mitochondrial carrier (TC 2.A.29) family. Monomer.

It localises to the mitochondrion inner membrane. It catalyses the reaction ADP(in) + ATP(out) = ADP(out) + ATP(in). With respect to regulation, the matrix-open state (m-state) is inhibited by the membrane-permeable bongkrekic acid (BKA). The cytoplasmic-open state (c-state) is inhibited by the membrane-impermeable toxic inhibitor carboxyatractyloside (CATR). ADP:ATP antiporter that mediates import of ADP into the mitochondrial matrix for ATP synthesis, and export of ATP out to fuel the cell. Cycles between the cytoplasmic-open state (c-state) and the matrix-open state (m-state): operates by the alternating access mechanism with a single substrate-binding site intermittently exposed to either the cytosolic (c-state) or matrix (m-state) side of the inner mitochondrial membrane. In Arabidopsis thaliana (Mouse-ear cress), this protein is ADP,ATP carrier protein 1, mitochondrial (AAC1).